A 468-amino-acid chain; its full sequence is 3-isopropylmalate dehydratase large subunit 2 (468 aa).

[4Fe-4S] cluster is bound by residues Cys349, Cys409, and Cys412.

It belongs to the aconitase/IPM isomerase family. LeuC type 1 subfamily. Heterodimer of LeuC and LeuD. The cofactor is [4Fe-4S] cluster.

It catalyses the reaction (2R,3S)-3-isopropylmalate = (2S)-2-isopropylmalate. Its pathway is amino-acid biosynthesis; L-leucine biosynthesis; L-leucine from 3-methyl-2-oxobutanoate: step 2/4. Catalyzes the isomerization between 2-isopropylmalate and 3-isopropylmalate, via the formation of 2-isopropylmaleate. This chain is 3-isopropylmalate dehydratase large subunit 2, found in Bradyrhizobium diazoefficiens (strain JCM 10833 / BCRC 13528 / IAM 13628 / NBRC 14792 / USDA 110).